We begin with the raw amino-acid sequence, 419 residues long: F-box/LRR-repeat protein At1g67190 (419 aa).

One can recognise an F-box domain in the interval 1 to 48 (MDYLPVEVIGNILSRLGGARDVVIASATCRKWREACRKHLQTLSFNSA). 9 LRR repeats span residues 53 to 82 (YRDL…SIMM), 96 to 124 (WLMY…EICG), 133 to 157 (LAHN…LSLS), 158 to 183 (YVSI…ELVS), 185 to 209 (EIAM…YFDG), 245 to 272 (HFKL…DVNH), 273 to 297 (FTMV…RLWD), 301 to 326 (DDDD…SLSY), and 356 to 381 (INDV…IIYG).

The polypeptide is F-box/LRR-repeat protein At1g67190 (Arabidopsis thaliana (Mouse-ear cress)).